Consider the following 293-residue polypeptide: Caspase-6 (293 aa).

Residues 1–20 form a disordered region; sequence MSSEPPPRRARGPGEEQNMT. The propeptide occupies 1 to 23; it reads MSSEPPPRRARGPGEEQNMTEID. Residues 42-44 are tri-arginine exosite; the sequence is KRR. Position 79 is a phosphoserine (Ser79). His121 is a catalytic residue. The 130's region stretch occupies residues 125-142; it reads NHIYAYDAKIEIQTLTGL. Cys163 is an active-site residue. The propeptide occupies 180 to 193; the sequence is HRTDTPDANLTQVD. Phosphoserine is present on Ser257. S-palmitoyl cysteine attachment occurs at residues Cys264 and Cys277.

Belongs to the peptidase C14A family. In terms of assembly, heterotetramer that consists of two anti-parallel arranged heterodimers, each one formed by a 18 kDa (p18) and a 11 kDa (p11) subunits. Interacts with BIRC6/bruce. Interacts with RIPK3. As to quaternary structure, heterotetramer that consists of two anti-parallel arranged heterodimers, each one formed by a 18 kDa (Caspase-6 subunit p18) and a 11 kDa (Caspase-6 subunit p11) subunit. In terms of processing, phosphorylated by NUAK1; phosphorylation inhibits self-activation. Phosphorylation at Ser-257 by AMP-activated protein kinase (PRKAA1 or PRKAA2) inhibits autocleavage, preventing caspase activation, thereby preventing hepatocyte apoptosis. Palmitoylation by ZDHHC17 blocks dimerization and subsequent activation, leading to inhibit the cysteine protease activity. Post-translationally, can be cleaved and activated by different caspases, depending on the context. Cleaved and activated by caspase-8 (CASP8) and subsequently by caspase-3 (CASP3). Can also undergo autoactivation by mediating autocleavage at Asp-179 and Asp-193, while it is not able to cleave its N-terminal disordered prodomain. Cleaved and activated by CASP1, possibly in the context of inflammation.

The protein resides in the cytoplasm. It is found in the nucleus. It catalyses the reaction Strict requirement for Asp at position P1 and has a preferred cleavage sequence of Val-Glu-His-Asp-|-.. During activation, the N-terminal disordered prodomain is removed by cleavage. Concomitantly, double cleavage gives rise to a large 18-kDa and a small 11-kDa subunit. The two large and two small subunits then assemble to form the active CASP6 complex. Can be cleaved and activated by different caspases, depending on the context. Cleaved and activated by caspase-8 (CASP8) and subsequently by caspase-3 (CASP3). Can also undergo autoactivation by mediating autocleavage at Asp-179 and Asp-193, while it is not able to cleave its N-terminal disordered prodomain. Intramolecular cleavage at Asp-193 is a prerequisite for CASP6 self-activation. Cleaved and activated by CASP1 in neurons, possibly in the context of inflammation. Phosphorylation at Ser-257 inhibits autocleavage, preventing caspase activation. Cysteine protease that plays essential roles in programmed cell death, axonal degeneration, development and innate immunity. Acts as a non-canonical executioner caspase during apoptosis: localizes in the nucleus and cleaves the nuclear structural protein NUMA1 and lamin A/LMNA thereby inducing nuclear shrinkage and fragmentation. Lamin-A/LMNA cleavage is required for chromatin condensation and nuclear disassembly during apoptotic execution. Acts as a regulator of liver damage by promoting hepatocyte apoptosis: in absence of phosphorylation by AMP-activated protein kinase (AMPK), catalyzes cleavage of BID, leading to cytochrome c release, thereby participating in nonalcoholic steatohepatitis. Cleaves PARK7/DJ-1 in cells undergoing apoptosis. Involved in intrinsic apoptosis by mediating cleavage of RIPK1. Furthermore, cleaves many transcription factors such as NF-kappa-B and cAMP response element-binding protein/CREBBP. Cleaves phospholipid scramblase proteins XKR4 and XKR9. In addition to apoptosis, involved in different forms of programmed cell death. Plays an essential role in defense against viruses by acting as a central mediator of the ZBP1-mediated pyroptosis, apoptosis, and necroptosis (PANoptosis), independently of its cysteine protease activity. PANoptosis is a unique inflammatory programmed cell death, which provides a molecular scaffold that allows the interactions and activation of machinery required for inflammasome/pyroptosis, apoptosis and necroptosis. Mechanistically, interacts with RIPK3 and enhances the interaction between RIPK3 and ZBP1, leading to ZBP1-mediated inflammasome activation and cell death. Plays an essential role in axon degeneration during axon pruning which is the remodeling of axons during neurogenesis but not apoptosis. Regulates B-cell programs both during early development and after antigen stimulation. The protein is Caspase-6 of Bos taurus (Bovine).